An 866-amino-acid chain; its full sequence is Leucine--tRNA ligase (866 aa).

The 'HIGH' region motif lies at 42 to 52; the sequence is PYPSGKLHMGH. The short motif at 630 to 634 is the 'KMSKS' region element; that stretch reads KMSKS. Lys633 is an ATP binding site.

Belongs to the class-I aminoacyl-tRNA synthetase family.

The protein localises to the cytoplasm. The catalysed reaction is tRNA(Leu) + L-leucine + ATP = L-leucyl-tRNA(Leu) + AMP + diphosphate. This Laribacter hongkongensis (strain HLHK9) protein is Leucine--tRNA ligase.